Consider the following 185-residue polypeptide: Ribosome-recycling factor (185 aa).

It belongs to the RRF family.

Its subcellular location is the cytoplasm. Functionally, responsible for the release of ribosomes from messenger RNA at the termination of protein biosynthesis. May increase the efficiency of translation by recycling ribosomes from one round of translation to another. The polypeptide is Ribosome-recycling factor (Shewanella woodyi (strain ATCC 51908 / MS32)).